Consider the following 572-residue polypeptide: Phosphoenolpyruvate-protein phosphotransferase (572 aa).

The active-site Tele-phosphohistidine intermediate is the His190. Phosphoenolpyruvate-binding residues include Arg297 and Arg333. The Mg(2+) site is built by Glu427 and Asp451. Phosphoenolpyruvate-binding positions include 450–451 (ND) and Arg461. Cys498 (proton donor) is an active-site residue.

It belongs to the PEP-utilizing enzyme family. As to quaternary structure, homodimer. Mg(2+) is required as a cofactor.

The protein localises to the cytoplasm. It carries out the reaction L-histidyl-[protein] + phosphoenolpyruvate = N(pros)-phospho-L-histidyl-[protein] + pyruvate. Its function is as follows. General (non sugar-specific) component of the phosphoenolpyruvate-dependent sugar phosphotransferase system (sugar PTS). This major carbohydrate active-transport system catalyzes the phosphorylation of incoming sugar substrates concomitantly with their translocation across the cell membrane. Enzyme I transfers the phosphoryl group from phosphoenolpyruvate (PEP) to the phosphoryl carrier protein (HPr). In Mycoplasma pneumoniae (strain ATCC 29342 / M129 / Subtype 1) (Mycoplasmoides pneumoniae), this protein is Phosphoenolpyruvate-protein phosphotransferase (ptsI).